A 75-amino-acid polypeptide reads, in one-letter code: UPF0352 protein VV1_3121 (75 aa).

This sequence belongs to the UPF0352 family.

The protein is UPF0352 protein VV1_3121 of Vibrio vulnificus (strain CMCP6).